The following is a 266-amino-acid chain: Glucosamine-6-phosphate deaminase (266 aa).

Asp72 (proton acceptor; for enolization step) is an active-site residue. The active-site For ring-opening step is the Asp141. His143 functions as the Proton acceptor; for ring-opening step in the catalytic mechanism. Catalysis depends on Glu148, which acts as the For ring-opening step.

This sequence belongs to the glucosamine/galactosamine-6-phosphate isomerase family. NagB subfamily. As to quaternary structure, homohexamer.

It carries out the reaction alpha-D-glucosamine 6-phosphate + H2O = beta-D-fructose 6-phosphate + NH4(+). It functions in the pathway amino-sugar metabolism; N-acetylneuraminate degradation; D-fructose 6-phosphate from N-acetylneuraminate: step 5/5. Allosterically activated by N-acetylglucosamine 6-phosphate (GlcNAc6P). Functionally, catalyzes the reversible isomerization-deamination of glucosamine 6-phosphate (GlcN6P) to form fructose 6-phosphate (Fru6P) and ammonium ion. The protein is Glucosamine-6-phosphate deaminase of Yersinia pseudotuberculosis serotype O:1b (strain IP 31758).